A 503-amino-acid chain; its full sequence is ATP synthase subunit alpha (503 aa).

169 to 176 (GDRQTGKT) lines the ATP pocket.

The protein belongs to the ATPase alpha/beta chains family. F-type ATPases have 2 components, CF(1) - the catalytic core - and CF(0) - the membrane proton channel. CF(1) has five subunits: alpha(3), beta(3), gamma(1), delta(1), epsilon(1). CF(0) has three main subunits: a(1), b(2) and c(9-12). The alpha and beta chains form an alternating ring which encloses part of the gamma chain. CF(1) is attached to CF(0) by a central stalk formed by the gamma and epsilon chains, while a peripheral stalk is formed by the delta and b chains.

It is found in the cell membrane. It carries out the reaction ATP + H2O + 4 H(+)(in) = ADP + phosphate + 5 H(+)(out). In terms of biological role, produces ATP from ADP in the presence of a proton gradient across the membrane. The alpha chain is a regulatory subunit. The protein is ATP synthase subunit alpha of Staphylococcus epidermidis (strain ATCC 35984 / DSM 28319 / BCRC 17069 / CCUG 31568 / BM 3577 / RP62A).